Here is a 1899-residue protein sequence, read N- to C-terminus: Protocadherin-15 (1899 aa).

An N-terminal signal peptide occupies residues 1-26 (MLQQFCLWKWLAVGIAVATILASSLA). Over 27–1376 (QNDEDCKLAR…AQAVGYTEGA (1350 aa)) the chain is Extracellular. An intrachain disulfide couples Cys32 to Cys120. 11 Cadherin domains span residues 38–147 (GPPA…SPQF), 148–265 (QQQR…GPMF), 278–395 (RPLT…KPYF), 396–509 (TKST…SPTF), 510–616 (SNIS…PPRF), 617–717 (PQLM…GPVF), 719–819 (MFLP…SPVF), 820–926 (TNAS…SPVF), 927–1035 (SKTL…IPRF), 1037–1144 (QDEY…APVF), and 1145–1259 (TKKM…PPTL). The chain crosses the membrane as a helical span at residues 1377 to 1397 (LLALAVIIILCCMPAILIVMV). At 1398–1899 (SYRQRQAECA…KRFPSQSTAL (502 aa)) the chain is on the cytoplasmic side. Disordered regions lie at residues 1668–1687 (SPCLRSSPLSSPTPCEVVEP), 1700–1721 (HDYPEELSPPPTRKPTPPSFRI), and 1734–1820 (TKGE…RREL). Composition is skewed to pro residues over residues 1706 to 1717 (LSPPPTRKPTPP) and 1743 to 1773 (PDPPKTPPPPPPLLPPPPPSPPLLPPHPPTL). Positions 1774–1791 (PLASVPSSSSLPSTQHLS) are enriched in low complexity. Residues 1804 to 1814 (AVPPPAAVPEP) show a composition bias toward pro residues.

In terms of tissue distribution, in the utricle, localizes to the distal region of the kinocilium and near the tips of the stereocilia.

It localises to the cell membrane. Its function is as follows. Calcium-dependent cell-adhesion protein. Required for inner ear neuroepithelial cell elaboration and cochlear function. Probably involved in the maintenance of normal retinal function. In Gallus gallus (Chicken), this protein is Protocadherin-15 (Pcdh15).